The chain runs to 173 residues: Peptidoglycan-associated lipoprotein (173 aa).

Residues 1 to 21 form the signal peptide; the sequence is MQLNKVLKGLMIALPVMAIAA. The N-palmitoyl cysteine moiety is linked to residue Cys-22. Cys-22 carries the S-diacylglycerol cysteine lipid modification. Residues 30–58 are disordered; the sequence is NDGSEGMLGAGTGMDANGGNGNMSSEEQA. A compositionally biased stretch (gly residues) spans 35 to 50; sequence GMLGAGTGMDANGGNG. The region spanning 60–173 is the OmpA-like domain; sequence LQMQQLQQNN…SKNRRAVLVY (114 aa).

This sequence belongs to the Pal lipoprotein family. As to quaternary structure, the Tol-Pal system is composed of five core proteins: the inner membrane proteins TolA, TolQ and TolR, the periplasmic protein TolB and the outer membrane protein Pal. They form a network linking the inner and outer membranes and the peptidoglycan layer.

The protein resides in the cell outer membrane. Part of the Tol-Pal system, which plays a role in outer membrane invagination during cell division and is important for maintaining outer membrane integrity. This is Peptidoglycan-associated lipoprotein from Escherichia coli O157:H7.